The sequence spans 495 residues: Methyl viologen resistance protein SmvA (495 aa).

Transmembrane regions (helical) follow at residues 5 to 25, 44 to 64, 73 to 93, 96 to 116, 135 to 155, 158 to 178, 192 to 212, 220 to 240, 260 to 280, 299 to 319, 327 to 347, 357 to 377, 391 to 411, and 469 to 489; these read WLTL…ATVL, LWII…MGAL, LLML…FSHT, WLIA…PATL, VWAA…GILL, FYWG…MGLT, PLNL…VYSA, LSLW…GLFI, IILS…GFEL, VFML…GVLV, VATG…MTDF, LMAL…SAIM, IETM…GLLL, and VALS…WFSL.

This sequence belongs to the major facilitator superfamily. TCR/Tet family.

The protein resides in the cell inner membrane. In terms of biological role, major efflux pump for acriflavine and other quaternary ammonium compounds (QACs). Also required for resistance to methyl viologen. This chain is Methyl viologen resistance protein SmvA (smvA), found in Salmonella typhimurium (strain LT2 / SGSC1412 / ATCC 700720).